The chain runs to 209 residues: Probable GTP-binding protein EngB (209 aa).

An EngB-type G domain is found at 23-198 (NGAEIAFAGR…EKVVAGWLVP (176 aa)). Residues 31-38 (GRSNAGKS), 58-62 (GRTQL), 76-79 (DLPG), 143-146 (TKSD), and 177-179 (FSS) contribute to the GTP site. The Mg(2+) site is built by Ser-38 and Thr-60.

Belongs to the TRAFAC class TrmE-Era-EngA-EngB-Septin-like GTPase superfamily. EngB GTPase family. Mg(2+) serves as cofactor.

Necessary for normal cell division and for the maintenance of normal septation. The protein is Probable GTP-binding protein EngB of Azoarcus sp. (strain BH72).